The following is a 122-amino-acid chain: Large ribosomal subunit protein uL18 (122 aa).

Residues 1–19 (MTKLSRKLQTQKRHRRLRR) are compositionally biased toward basic residues. The disordered stretch occupies residues 1-21 (MTKLSRKLQTQKRHRRLRRSV).

It belongs to the universal ribosomal protein uL18 family. As to quaternary structure, part of the 50S ribosomal subunit; part of the 5S rRNA/L5/L18/L25 subcomplex. Contacts the 5S and 23S rRNAs.

In terms of biological role, this is one of the proteins that bind and probably mediate the attachment of the 5S RNA into the large ribosomal subunit, where it forms part of the central protuberance. The sequence is that of Large ribosomal subunit protein uL18 from Prochlorococcus marinus (strain MIT 9312).